Consider the following 410-residue polypeptide: Peptidase T (410 aa).

H79 is a binding site for Zn(2+). Residue D81 is part of the active site. Residue D142 participates in Zn(2+) binding. The active-site Proton acceptor is E176. 3 residues coordinate Zn(2+): E177, D199, and H381.

This sequence belongs to the peptidase M20B family. Requires Zn(2+) as cofactor.

Its subcellular location is the cytoplasm. It catalyses the reaction Release of the N-terminal residue from a tripeptide.. In terms of biological role, cleaves the N-terminal amino acid of tripeptides. The protein is Peptidase T of Bacillus velezensis (strain DSM 23117 / BGSC 10A6 / LMG 26770 / FZB42) (Bacillus amyloliquefaciens subsp. plantarum).